A 302-amino-acid polypeptide reads, in one-letter code: Recombination-associated protein RdgC (302 aa).

This sequence belongs to the RdgC family.

It localises to the cytoplasm. Its subcellular location is the nucleoid. Its function is as follows. May be involved in recombination. This Mannheimia succiniciproducens (strain KCTC 0769BP / MBEL55E) protein is Recombination-associated protein RdgC.